A 451-amino-acid polypeptide reads, in one-letter code: MRECISIHVGQAGVQIGNACWELYCLEHGIQPDGQMPSDKTIGGGDDSFNTFFSETGAGKHVPRAVFVDLEPTVIDEVRTGTYRQLFHPEQLITGKEDAANNYARGHYTIGKEIIDLVLDRIRKLADQCTGLQGFLVFHSFGGGTGSGFTSLLMERLSVDYGKKSKLEFSIYPAPQVSTAVVEPYNSILTTHTTLEHSDCAFMVDNEAIYDICRRNLDIERPTYTNLNRLISQIVSSITASLRFDGALNVDLTEFQTNLVPYPRIHFPLATYAPVISAEKAYHEQLSVSEITNACFEPANQMVKCDPRHGKYMACCLLYRGDVVPKDVNAAIATIKTKRSIQFVDWCPTGFKVGINYQPPTVVPGGDLAKVQRAVCMLSNTTAIAEAWARLDHKFDLMYAKRAFVHWYVGEGMEEGEFSEAREDMAALEKDYEEVGVDSVEGEGEEEGEEY.

The MREC motif motif lies at 1 to 4 (MREC). Gln-11 lines the GTP pocket. The residue at position 40 (Lys-40) is an N6-acetyllysine. GTP contacts are provided by Glu-71, Ser-140, Gly-144, Thr-145, Thr-179, Asn-206, and Asn-228. Glu-71 is a Mg(2+) binding site. Glu-254 is an active-site residue. The segment at 432–451 (YEEVGVDSVEGEGEEEGEEY) is disordered. The residue at position 445 (Glu-445) is a 5-glutamyl polyglutamate.

This sequence belongs to the tubulin family. In terms of assembly, dimer of alpha and beta chains. A typical microtubule is a hollow water-filled tube with an outer diameter of 25 nm and an inner diameter of 15 nM. Alpha-beta heterodimers associate head-to-tail to form protofilaments running lengthwise along the microtubule wall with the beta-tubulin subunit facing the microtubule plus end conferring a structural polarity. Microtubules usually have 13 protofilaments but different protofilament numbers can be found in some organisms and specialized cells. Mg(2+) serves as cofactor. In terms of processing, some glutamate residues at the C-terminus are polyglycylated, resulting in polyglycine chains on the gamma-carboxyl group. Glycylation is mainly limited to tubulin incorporated into axonemes (cilia and flagella) whereas glutamylation is prevalent in neuronal cells, centrioles, axonemes, and the mitotic spindle. Both modifications can coexist on the same protein on adjacent residues, and lowering polyglycylation levels increases polyglutamylation, and reciprocally. The precise function of polyglycylation is still unclear. Post-translationally, some glutamate residues at the C-terminus are polyglutamylated, resulting in polyglutamate chains on the gamma-carboxyl group. Polyglutamylation plays a key role in microtubule severing by spastin (SPAST). SPAST preferentially recognizes and acts on microtubules decorated with short polyglutamate tails: severing activity by SPAST increases as the number of glutamates per tubulin rises from one to eight, but decreases beyond this glutamylation threshold. Acetylation of alpha chains at Lys-40 is located inside the microtubule lumen. This modification has been correlated with increased microtubule stability, intracellular transport and ciliary assembly. In terms of processing, undergoes a tyrosination/detyrosination cycle, the cyclic removal and re-addition of a C-terminal tyrosine residue by the enzymes tubulin tyrosine carboxypeptidase (MATCAP, VASH1 or VASH2) and tubulin tyrosine ligase (TTL), respectively. Post-translationally, tyrosination promotes microtubule interaction with CAP-Gly microtubule plus-end tracking proteins. Tyrosinated tubulins regulate the initiation of dynein-driven motility. Detyrosination is involved in metaphase plate congression by guiding chromosomes during mitosis. Detyrosination increases microtubules-dependent mechanotransduction in dystrophic cardiac and skeletal muscle. In cardiomyocytes, detyrosinated microtubules are required to resist to contractile compression during contraction.

The protein localises to the cytoplasm. Its subcellular location is the cytoskeleton. It carries out the reaction GTP + H2O = GDP + phosphate + H(+). Its function is as follows. Tubulin is the major constituent of microtubules, a cylinder consisting of laterally associated linear protofilaments composed of alpha- and beta-tubulin heterodimers. Microtubules grow by the addition of GTP-tubulin dimers to the microtubule end, where a stabilizing cap forms. Below the cap, tubulin dimers are in GDP-bound state, owing to GTPase activity of alpha-tubulin. The sequence is that of Tubulin alpha chain from Torpedo marmorata (Marbled electric ray).